The chain runs to 280 residues: MLKSIRTAEIILSALPYIQKFRDEIFVIKYGGAAQIDEKLKNNFARDIVLLQLVGIKAVIVHGGGKKINSFLERLNLKSEFIDGLRVTDKDAMEVVEMTLSGLINKEITSLLNKHGARAIGISGKDDNMLKAKSLDDGKYGFVGEITDVNENVILTIINDGLIPVIAPIAIGSEYETYNINADLCASAIASKLKARKVIFLSDIKGVLDKDEKLISKLNETSINELKNNGAISGGMIPKIDACLECIKSGVGAAHIIDGKIPHSLLLEIFTDEGIGSVIK.

Residues 64-65, arginine 86, and asparagine 179 each bind substrate; that span reads GG.

It belongs to the acetylglutamate kinase family. ArgB subfamily.

The protein localises to the cytoplasm. It catalyses the reaction N-acetyl-L-glutamate + ATP = N-acetyl-L-glutamyl 5-phosphate + ADP. It participates in amino-acid biosynthesis; L-arginine biosynthesis; N(2)-acetyl-L-ornithine from L-glutamate: step 2/4. In terms of biological role, catalyzes the ATP-dependent phosphorylation of N-acetyl-L-glutamate. The chain is Acetylglutamate kinase from Campylobacter fetus subsp. fetus (strain 82-40).